We begin with the raw amino-acid sequence, 378 residues long: 1-acyl-sn-glycerol-3-phosphate acyltransferase delta (378 aa).

A helical transmembrane segment spans residues F11–I31. The HXXXXD motif signature appears at H96–D101. 3 consecutive transmembrane segments (helical) span residues E125–S145, T307–V327, and L338–V358.

This sequence belongs to the 1-acyl-sn-glycerol-3-phosphate acyltransferase family. In terms of tissue distribution, widely expressed with highest levels in skeletal muscle, followed by heart, liver, prostate and thymus.

The protein resides in the endoplasmic reticulum membrane. The catalysed reaction is a 1-acyl-sn-glycero-3-phosphate + an acyl-CoA = a 1,2-diacyl-sn-glycero-3-phosphate + CoA. It carries out the reaction (4Z,7Z,10Z,13Z,16Z,19Z)-docosahexaenoyl-CoA + 1-hexadecanoyl-sn-glycero-3-phosphate = 1-hexadecanoyl-2-(4Z,7Z,10Z,13Z,16Z,19Z-docosahexaenoyl)-sn-glycero-3-phosphate + CoA. It catalyses the reaction 1-octadecanoyl-sn-glycero-3-phosphate + (9Z,12Z)-octadecadienoyl-CoA = 1-octadecanoyl-2-(9Z,12Z-octadecadienoyl)-sn-glycero-3-phosphate + CoA. The enzyme catalyses 1-octadecanoyl-sn-glycero-3-phosphate + (4Z,7Z,10Z,13Z,16Z,19Z)-docosahexaenoyl-CoA = 1-octadecanoyl-2-(4Z,7Z,10Z,13Z,16Z,19Z-docosahexaenoyl)-sn-glycero-3-phosphate + CoA. The catalysed reaction is (4Z,7Z,10Z,13Z,16Z,19Z)-docosahexaenoyl-CoA + 1-(9Z-octadecenoyl)-sn-glycero-3-phosphate = 1-(9Z-octadecenoyl)-2-(4Z,7Z,10Z,13Z,16Z,19Z-docosahexaenoyl)-sn-glycero-3-phosphate + CoA. It participates in phospholipid metabolism; CDP-diacylglycerol biosynthesis; CDP-diacylglycerol from sn-glycerol 3-phosphate: step 2/3. Its function is as follows. Converts 1-acyl-sn-glycerol-3-phosphate (lysophosphatidic acid or LPA) into 1,2-diacyl-sn-glycerol-3-phosphate (phosphatidic acid or PA) by incorporating an acyl moiety at the sn-2 position of the glycerol backbone. Exhibits high acyl-CoA specificity for polyunsaturated fatty acyl-CoA, especially docosahexaenoyl-CoA (22:6-CoA, DHA-CoA). The chain is 1-acyl-sn-glycerol-3-phosphate acyltransferase delta (AGPAT4) from Homo sapiens (Human).